A 90-amino-acid chain; its full sequence is Protein RL8A (90 aa).

Residues 15–34 form a helical membrane-spanning segment; sequence WTCEGLLLLLGLLVLFFHHH. The tract at residues 55–90 is disordered; it reads HESGWYSSDDDGDRDGDEETGESHNRNSVGLSAVFS. Over residues 62–74 the composition is skewed to acidic residues; the sequence is SDDDGDRDGDEET. Over residues 80 to 90 the composition is skewed to polar residues; sequence RNSVGLSAVFS.

The protein localises to the host membrane. This Homo sapiens (Human) protein is Protein RL8A (RL8A).